A 208-amino-acid chain; its full sequence is Uracil phosphoribosyltransferase (208 aa).

5-phospho-alpha-D-ribose 1-diphosphate-binding positions include Arg-78, Arg-103, and 130 to 138 (DPMLATGGS). Uracil is bound by residues Ile-193 and 198–200 (GDA). Position 199 (Asp-199) interacts with 5-phospho-alpha-D-ribose 1-diphosphate.

The protein belongs to the UPRTase family. Mg(2+) is required as a cofactor.

It carries out the reaction UMP + diphosphate = 5-phospho-alpha-D-ribose 1-diphosphate + uracil. It participates in pyrimidine metabolism; UMP biosynthesis via salvage pathway; UMP from uracil: step 1/1. With respect to regulation, allosterically activated by GTP. Functionally, catalyzes the conversion of uracil and 5-phospho-alpha-D-ribose 1-diphosphate (PRPP) to UMP and diphosphate. The chain is Uracil phosphoribosyltransferase from Mannheimia succiniciproducens (strain KCTC 0769BP / MBEL55E).